The sequence spans 291 residues: NAD kinase (291 aa).

Asp-55 functions as the Proton acceptor in the catalytic mechanism. NAD(+)-binding positions include 55–56 (DG), Arg-60, 130–131 (NE), Asp-160, and 171–176 (TAYAFS).

The protein belongs to the NAD kinase family. A divalent metal cation is required as a cofactor.

The protein resides in the cytoplasm. The catalysed reaction is NAD(+) + ATP = ADP + NADP(+) + H(+). Its function is as follows. Involved in the regulation of the intracellular balance of NAD and NADP, and is a key enzyme in the biosynthesis of NADP. Catalyzes specifically the phosphorylation on 2'-hydroxyl of the adenosine moiety of NAD to yield NADP. The polypeptide is NAD kinase (Corynebacterium glutamicum (strain ATCC 13032 / DSM 20300 / JCM 1318 / BCRC 11384 / CCUG 27702 / LMG 3730 / NBRC 12168 / NCIMB 10025 / NRRL B-2784 / 534)).